The following is a 259-amino-acid chain: Type III pantothenate kinase (259 aa).

Residue aspartate 6 to valine 13 participates in ATP binding. Glycine 107 to arginine 110 provides a ligand contact to substrate. Catalysis depends on aspartate 109, which acts as the Proton acceptor. A K(+)-binding site is contributed by aspartate 129. Threonine 132 serves as a coordination point for ATP. Threonine 184 serves as a coordination point for substrate.

The protein belongs to the type III pantothenate kinase family. As to quaternary structure, homodimer. NH4(+) is required as a cofactor. The cofactor is K(+).

The protein resides in the cytoplasm. It carries out the reaction (R)-pantothenate + ATP = (R)-4'-phosphopantothenate + ADP + H(+). Its pathway is cofactor biosynthesis; coenzyme A biosynthesis; CoA from (R)-pantothenate: step 1/5. Functionally, catalyzes the phosphorylation of pantothenate (Pan), the first step in CoA biosynthesis. The protein is Type III pantothenate kinase of Thermomicrobium roseum (strain ATCC 27502 / DSM 5159 / P-2).